The following is a 133-amino-acid chain: ATP synthase epsilon chain, chloroplastic (133 aa).

The protein belongs to the ATPase epsilon chain family. F-type ATPases have 2 components, CF(1) - the catalytic core - and CF(0) - the membrane proton channel. CF(1) has five subunits: alpha(3), beta(3), gamma(1), delta(1), epsilon(1). CF(0) has three main subunits: a, b and c.

It is found in the plastid. It localises to the chloroplast thylakoid membrane. Functionally, produces ATP from ADP in the presence of a proton gradient across the membrane. The sequence is that of ATP synthase epsilon chain, chloroplastic from Lactuca sativa (Garden lettuce).